The sequence spans 288 residues: Prepilin leader peptidase/N-methyltransferase (288 aa).

A helical membrane pass occupies residues 14 to 34 (FITLATVLGLLVGSFLNVVVY). 4 residues coordinate Zn(2+): C71, C74, C96, and C99. Helical transmembrane passes span 103–123 (ISVRYPLVEVGCALLSMVVAW), 127–147 (ASVEALVLLPLTWSLLALSLI), 158–178 (IVLPGLWLGLIVNYFGVWVPL), 182–202 (VCGAVVGYLSLWTVYWLFKLV), 227–247 (VLPLTLLLSSVLGALVGVYLL), and 254–274 (MGTAMPFGPYLAIAGWIAVLW).

Belongs to the peptidase A24 family. Zn(2+) serves as cofactor.

Its subcellular location is the cell inner membrane. The catalysed reaction is Typically cleaves a -Gly-|-Phe- bond to release an N-terminal, basic peptide of 5-8 residues from type IV prepilin, and then N-methylates the new N-terminal amino group, the methyl donor being S-adenosyl-L-methionine.. Functionally, plays an essential role in type IV pili and type II pseudopili formation by proteolytically removing the leader sequence from substrate proteins and subsequently monomethylating the alpha-amino group of the newly exposed N-terminal phenylalanine. The protein is Prepilin leader peptidase/N-methyltransferase (pilD) of Pseudomonas putida (Arthrobacter siderocapsulatus).